Here is a 1200-residue protein sequence, read N- to C-terminus: NACHT, LRR and PYD domains-containing protein 5 (1200 aa).

A Pyrin domain is found at 57-148 (SLTFSSYGLQ…SEKARDDMKR (92 aa)). Positions 142–152 (ARDDMKRHSPE) are enriched in basic and acidic residues. Residues 142 to 232 (ARDDMKRHSP…TEEQGHGGDT (91 aa)) form a disordered region. Polar residues predominate over residues 173-182 (QAVQQDSATA). 2 stretches are compositionally biased toward low complexity: residues 192 to 202 (QAMEQEGATAA) and 209 to 221 (ISQA…ATAA). An NACHT domain is found at 280-602 (RTVVLHGKSG…ALYYVLEGLE (323 aa)). 286 to 293 (GKSGIGKS) contacts ATP. 13 LRR repeats span residues 704 to 727 (LNSF…SFCL), 730 to 753 (CPYL…AEAC), 780 to 803 (HPHL…TLCA), 809 to 832 (TCKI…LWRI), 836 to 863 (NRNL…ALKH), 865 to 892 (KCLL…ILTT), 893 to 916 (SPSL…PLSD), 950 to 973 (NRSL…LLCR), 979 to 1002 (HCSL…FLAL), 1007 to 1034 (NSWL…VMRE), 1036 to 1059 (SCHL…SLSC), 1064 to 1092 (SRHL…LKQK), and 1121 to 1142 (NRHL…MMKL).

It belongs to the NLRP family. In terms of assembly, component of the subcortical maternal complex (SCMC), at least composed of NLRP5, KHDC3, OOEP, and TLE6 isoform 1. Within the complex, interacts with OOEP, KHDC3L and TLE6. The SCMC may facilitate translocation of its components between the nuclear and cytoplasmic compartments. As part of the SCMC interacts with the SCMC-associated protein ZBED3. As part of the SCMC interacts with the SCMC-associated protein CFL1/Cofilin-1. Interacts with PRKCE. Interacts with TUBB3 at cytoskeleton microtubules. Phosphorylated by PRKCE. As to expression, expressed in cumulus cells (at protein level). Highly abundant in oocytes and early embryos, however poorly expressed in somatic tissues such as the liver and spinal cord.

It is found in the cytoplasm. The protein localises to the cytoplasmic vesicle. Its subcellular location is the secretory vesicle. The protein resides in the cortical granule. It localises to the mitochondrion. It is found in the nucleus. The protein localises to the nucleolus. Its subcellular location is the golgi apparatus. Functionally, component of the subcortical maternal complex (SCMC), a multiprotein complex that plays a key role in early embryonic development. The SCMC complex is a structural constituent of cytoplasmic lattices, which consist in fibrous structures found in the cytoplasm of oocytes and preimplantation embryos. They are required to store maternal proteins critical for embryonic development, such as proteins that control epigenetic reprogramming of the preimplantation embryo, and prevent their degradation or activation. Required for the localization of cortical granules to the cortex of oocytes, via association with the cortical actin scaffold. Required for cortical actin clearance prior to oocyte exocytosis and prevention of polyspermy. Involved in regulating post-fertilization Ca(2+) release and endoplasmic reticulum storage (ER) storage via regulation of cellular localization. May be involved in the localization of mitochondria to the cytoplasm and perinuclear region in oocytes and early stage embryos, independent of its role in CPL formation. This is NACHT, LRR and PYD domains-containing protein 5 (NLRP5) from Homo sapiens (Human).